Consider the following 450-residue polypeptide: uncharacterized protein (450 aa).

The span at W141–S151 shows a compositional bias: basic and acidic residues. Disordered stretches follow at residues W141–G171, L276–Q298, and D395–N416. Polar residues predominate over residues E152–G171. The segment covering Q283–Q298 has biased composition (basic and acidic residues). Acidic residues predominate over residues D395–S411.

This is an uncharacterized protein from Saccharomyces cerevisiae (strain ATCC 204508 / S288c) (Baker's yeast).